Here is a 1400-residue protein sequence, read N- to C-terminus: DNA-directed RNA polymerase subunit beta' (1400 aa).

4 residues coordinate Zn(2+): cysteine 70, cysteine 72, cysteine 85, and cysteine 88. Residues aspartate 460, aspartate 462, and aspartate 464 each coordinate Mg(2+). Zn(2+) contacts are provided by cysteine 814, cysteine 889, cysteine 896, and cysteine 899.

Belongs to the RNA polymerase beta' chain family. The RNAP catalytic core consists of 2 alpha, 1 beta, 1 beta' and 1 omega subunit. When a sigma factor is associated with the core the holoenzyme is formed, which can initiate transcription. It depends on Mg(2+) as a cofactor. Zn(2+) is required as a cofactor.

It carries out the reaction RNA(n) + a ribonucleoside 5'-triphosphate = RNA(n+1) + diphosphate. Its function is as follows. DNA-dependent RNA polymerase catalyzes the transcription of DNA into RNA using the four ribonucleoside triphosphates as substrates. The protein is DNA-directed RNA polymerase subunit beta' of Alcanivorax borkumensis (strain ATCC 700651 / DSM 11573 / NCIMB 13689 / SK2).